Consider the following 435-residue polypeptide: Zinc finger CCCH domain-containing protein 16 (435 aa).

Residues 1–27 (MRKELCRNFQRGSCRYGENCRFLHPQQ) form a C3H1-type zinc finger. Residues 2–88 (RKELCRNFQR…ASTPTGGGAA (87 aa)) form a 6 X 2 AA repeats of F-G region. Disordered stretches follow at residues 25-105 (PQQA…DHKC) and 205-374 (TPSI…SQNN). Tandem repeats lie at residues 34 to 35 (FG) and 36 to 37 (FG). Over residues 39–51 (QNQQQQQQQQQQN) the composition is skewed to low complexity. 2 repeat units span residues 56 to 57 (FG) and 58 to 59 (FG). Over residues 63 to 77 (GGSSRPNQFQNTWSR) the composition is skewed to polar residues. Over residues 78–99 (TASTPTGGGAAASTQQTGKQTQ) the composition is skewed to low complexity. Composition is skewed to polar residues over residues 205 to 320 (TPSI…VNTP) and 328 to 339 (SGFQTNPSTTFK). A run of 2 repeats spans residues 343-344 (FG) and 359-360 (FG). Positions 351–374 (TTPQNNNIFGQSTPTPATNTSQNN) are enriched in polar residues.

In terms of assembly, part of the nuclear pore complex (NPC). The NPC has an eight-fold symmetrical structure comprising a central transport channel and two rings, the cytoplasmic and nuclear rings, to which eight filaments are attached. The cytoplasmic filaments have loose ends, while the nuclear filaments are joined in a distal ring, forming a nuclear basket. NPCs are highly dynamic in configuration and composition, and can be devided in 3 subcomplexes, the NUP62 subcomplex, the NUP107-160 subcomplex and the NUP93 subcomplex, containing approximately 30 different nucleoporin proteins.

It is found in the nucleus envelope. Its subcellular location is the nucleus. The protein localises to the nuclear pore complex. The sequence is that of Zinc finger CCCH domain-containing protein 16 from Arabidopsis thaliana (Mouse-ear cress).